We begin with the raw amino-acid sequence, 715 residues long: Lanosterol synthase erg7B (715 aa).

The PFTB 1 repeat unit spans residues 111–153; it reads AIEIKNYLMARANPVDGGWGLHSEGDSSVFGTSLNYTVLRLLG. Asp445 serves as the catalytic Proton donor. 2 PFTB repeats span residues 550-590 and 599-640; these read IQRG…RSAG and VRRG…VVQT.

This sequence belongs to the terpene cyclase/mutase family.

The protein localises to the lipid droplet. Its subcellular location is the endoplasmic reticulum membrane. The catalysed reaction is (S)-2,3-epoxysqualene = lanosterol. Its pathway is steroid metabolism; ergosterol biosynthesis. Lanosterol synthase; part of the third module of ergosterol biosynthesis pathway that includes the late steps of the pathway. ERG7A and ERG7B catalyze the cyclization of (S)-2,3 oxidosqualene to lanosterol, a reaction that forms the sterol core. The third module or late pathway involves the ergosterol synthesis itself through consecutive reactions that mainly occur in the endoplasmic reticulum (ER) membrane. Firstly, the squalene synthase erg9 catalyzes the condensation of 2 farnesyl pyrophosphate moieties to form squalene, which is the precursor of all steroids. Squalene synthase is crucial for balancing the incorporation of farnesyl diphosphate (FPP) into sterol and nonsterol isoprene synthesis. Secondly, squalene is converted into lanosterol by the consecutive action of the squalene epoxidase erg1 and the lanosterol synthase erg7. Then, the delta(24)-sterol C-methyltransferase erg6 methylates lanosterol at C-24 to produce eburicol. Eburicol is the substrate of the sterol 14-alpha demethylase encoded by cyp51A and cyp51B, to yield 4,4,24-trimethyl ergosta-8,14,24(28)-trienol. The C-14 reductase erg24 then reduces the C14=C15 double bond which leads to 4,4-dimethylfecosterol. A sequence of further demethylations at C-4, involving the C-4 demethylation complex containing the C-4 methylsterol oxidases erg25A or erg25B, the sterol-4-alpha-carboxylate 3-dehydrogenase erg26 and the 3-keto-steroid reductase erg27, leads to the production of fecosterol via 4-methylfecosterol. The C-8 sterol isomerase erg2 then catalyzes the reaction which results in unsaturation at C-7 in the B ring of sterols and thus converts fecosterol to episterol. The sterol-C5-desaturase erg3B then catalyzes the introduction of a C-5 double bond in the B ring to produce 5-dehydroepisterol. The 2 other sterol-C5-desaturases, erg3A and erg3C, seem to be less important in ergosterol biosynthesis. The C-22 sterol desaturase erg5 further converts 5-dehydroepisterol into ergosta-5,7,22,24(28)-tetraen-3beta-ol by forming the C-22(23) double bond in the sterol side chain. Finally, ergosta-5,7,22,24(28)-tetraen-3beta-ol is substrate of the C-24(28) sterol reductases erg4A and erg4B to produce ergosterol. Possible alternative sterol biosynthetic pathways might exist from fecosterol to ergosterol, depending on the activities of the erg3 isoforms. This is Lanosterol synthase erg7B from Aspergillus fumigatus (strain ATCC MYA-4609 / CBS 101355 / FGSC A1100 / Af293) (Neosartorya fumigata).